We begin with the raw amino-acid sequence, 345 residues long: Gibberellin receptor GID1A (345 aa).

N-acetylalanine is present on A2. The short motif at 113–115 (HGG) is the Involved in the stabilization of the negatively charged intermediate by the formation of the oxyanion hole element. Gibberellin A4 is bound by residues 115–116 (GS), Y127, and S191. The gibberellin A3 site is built by S116, Y127, S191, and F238. The active site involves S191. Residue D289 is part of the active site. G320 is a binding site for gibberellin A4. G320 is a gibberellin A3 binding site.

The protein belongs to the 'GDXG' lipolytic enzyme family. As to quaternary structure, interacts (via N-terminus) with the DELLA proteins GAI, RGA, RGL1, RGL2 and RGL3 (via N-terminus) in a GA-dependent manner. In terms of tissue distribution, widely expressed.

It localises to the nucleus. Its function is as follows. Functions as a soluble gibberellin (GA) receptor. GA is an essential hormone that regulates growth and development in plants. Binds with high affinity the biologically active gibberellin GA4, but has no affinity for the biologically inactive GAs. In response to GA, interacts with specific DELLA proteins, known as repressors of GA-induced growth, and targets them for degradation via proteasome. Seems to be required for GA signaling that controls root growth, seed germination, stem elongation and flower development. Partially redundant with GID1B and GID1C. The chain is Gibberellin receptor GID1A (GID1A) from Arabidopsis thaliana (Mouse-ear cress).